The sequence spans 102 residues: Small ribosomal subunit protein eS24 (102 aa).

This sequence belongs to the eukaryotic ribosomal protein eS24 family.

In Methanobrevibacter smithii (strain ATCC 35061 / DSM 861 / OCM 144 / PS), this protein is Small ribosomal subunit protein eS24.